The chain runs to 1405 residues: DNA-directed RNA polymerase subunit beta' (1405 aa).

C71, C73, C86, and C89 together coordinate Zn(2+). Residues D462, D464, and D466 each coordinate Mg(2+). Zn(2+) contacts are provided by C820, C893, C900, and C903.

Belongs to the RNA polymerase beta' chain family. The RNAP catalytic core consists of 2 alpha, 1 beta, 1 beta' and 1 omega subunit. When a sigma factor is associated with the core the holoenzyme is formed, which can initiate transcription. It depends on Mg(2+) as a cofactor. The cofactor is Zn(2+).

The enzyme catalyses RNA(n) + a ribonucleoside 5'-triphosphate = RNA(n+1) + diphosphate. Functionally, DNA-dependent RNA polymerase catalyzes the transcription of DNA into RNA using the four ribonucleoside triphosphates as substrates. The chain is DNA-directed RNA polymerase subunit beta' from Methylorubrum extorquens (strain CM4 / NCIMB 13688) (Methylobacterium extorquens).